Here is a 502-residue protein sequence, read N- to C-terminus: Pyruvate kinase (502 aa).

R54 lines the substrate pocket. K(+)-binding residues include N56, S58, D88, and T89. 56 to 59 contributes to the ATP binding site; that stretch reads NFSH. Positions 95 and 184 each coordinate ATP. Residue E252 coordinates Mg(2+). Substrate contacts are provided by G275, D276, and T308. D276 is a Mg(2+) binding site.

Belongs to the pyruvate kinase family. As to quaternary structure, homotetramer. Requires Mg(2+) as cofactor. K(+) is required as a cofactor.

The catalysed reaction is pyruvate + ATP = phosphoenolpyruvate + ADP + H(+). It participates in carbohydrate degradation; glycolysis; pyruvate from D-glyceraldehyde 3-phosphate: step 5/5. With respect to regulation, regulated by phosphoenolpyruvate substrate and is allosterically activated by ribose-5-phosphate, AMP and other nucleoside monophosphates but not by fructose-1,6-bisphosphate. This Lactococcus lactis subsp. lactis (strain IL1403) (Streptococcus lactis) protein is Pyruvate kinase (pyk).